Consider the following 316-residue polypeptide: MRKRKVAIIGSGNIGTDLMIKILRHGQHLEMAVMVGIDPQSDGLARARRMGVATTHEGVGGLMQMAEFADIDFVFDATSAGAHIKNDAALREAKPGIRVIDLTPAAIGPYCVPVVNLAANLHQGNVNMVTCGGQATIPMVAAVSRVAKVHYAEIVASIASQSAGPGTRANIDEFTETTSQAIEKVGGAGKGKAIIVLNPAEPPLMMRDTVYVLSELASQEAIAASIAEMAAAVQAYVPGYRLKQQVQFEVIPEDKPVNLPGIGCFSGLKTAVYLEVEGAAHYLPAYAGNLDIMTSAALATAEQMAGAMHSAAGATA.

11–14 (SGNI) is an NAD(+) binding site. Cys-131 serves as the catalytic Acyl-thioester intermediate. NAD(+)-binding positions include 162-170 (SAGPGTRAN) and Asn-289.

This sequence belongs to the acetaldehyde dehydrogenase family. As to quaternary structure, interacts with MhpE.

It carries out the reaction acetaldehyde + NAD(+) + CoA = acetyl-CoA + NADH + H(+). Its pathway is aromatic compound metabolism; 3-phenylpropanoate degradation. Its function is as follows. Catalyzes the conversion of acetaldehyde to acetyl-CoA, using NAD(+) and coenzyme A. Is the final enzyme in the meta-cleavage pathway for the degradation of aromatic compounds. The sequence is that of Acetaldehyde dehydrogenase from Klebsiella pneumoniae (strain 342).